A 205-amino-acid polypeptide reads, in one-letter code: Urease accessory protein UreG (205 aa).

Residue 14-21 (GPVGSGKT) participates in GTP binding.

As to quaternary structure, homodimer. UreD, UreF and UreG form a complex that acts as a GTP-hydrolysis-dependent molecular chaperone, activating the urease apoprotein by helping to assemble the nickel containing metallocenter of UreC. The UreE protein probably delivers the nickel.

The protein localises to the cytoplasm. With respect to regulation, activation of apourease within the UreDFG-apoprotein complex is inhibited by zinc, copper and cobalt. Facilitates the functional incorporation of the urease nickel metallocenter. This process requires GTP hydrolysis, probably effectuated by UreG. This chain is Urease accessory protein UreG, found in Klebsiella aerogenes (Enterobacter aerogenes).